We begin with the raw amino-acid sequence, 221 residues long: UPF0758 protein YicR (221 aa).

One can recognise an MPN domain in the interval 99-221 (ALLSPEMTRE…YVSFAERGWI (123 aa)). Residues His170, His172, and Asp183 each contribute to the Zn(2+) site. The short motif at 170–183 (HNHPSGCAEPSKAD) is the JAMM motif element.

This sequence belongs to the UPF0758 family. YicR subfamily.

The sequence is that of UPF0758 protein YicR from Salmonella agona (strain SL483).